Consider the following 179-residue polypeptide: Interleukin-10 (179 aa).

Positions 1-19 are cleaved as a signal peptide; sequence MPSSSALLCCLVFLAGVAA. 2 disulfides stabilise this stretch: Cys31–Cys127 and Cys81–Cys133. An N-linked (GlcNAc...) asparagine glycan is attached at Asn135.

This sequence belongs to the IL-10 family. As to quaternary structure, homodimer. Interacts with IL10RA and IL10RB.

It is found in the secreted. Major immune regulatory cytokine that acts on many cells of the immune system where it has profound anti-inflammatory functions, limiting excessive tissue disruption caused by inflammation. Mechanistically, IL10 binds to its heterotetrameric receptor comprising IL10RA and IL10RB leading to JAK1 and STAT2-mediated phosphorylation of STAT3. In turn, STAT3 translocates to the nucleus where it drives expression of anti-inflammatory mediators. Targets antigen-presenting cells (APCs) such as macrophages and monocytes and inhibits their release of pro-inflammatory cytokines including granulocyte-macrophage colony-stimulating factor /GM-CSF, granulocyte colony-stimulating factor/G-CSF, IL-1 alpha, IL-1 beta, IL-6, IL-8 and TNF-alpha. Also interferes with antigen presentation by reducing the expression of MHC-class II and co-stimulatory molecules, thereby inhibiting their ability to induce T cell activation. In addition, controls the inflammatory response of macrophages by reprogramming essential metabolic pathways including mTOR signaling. The sequence is that of Interleukin-10 (IL10) from Cervus elaphus (Red deer).